The primary structure comprises 311 residues: Catechol 1,2-dioxygenase (311 aa).

Tyrosine 164 is a catechol binding site. Positions 164, 200, 224, and 226 each coordinate Fe cation. Histidine 224–histidine 226 serves as a coordination point for catechol.

The protein belongs to the intradiol ring-cleavage dioxygenase family. Homodimer. The cofactor is Fe(3+).

It carries out the reaction catechol + O2 = cis,cis-muconate + 2 H(+). It participates in aromatic compound metabolism; beta-ketoadipate pathway; 5-oxo-4,5-dihydro-2-furylacetate from catechol: step 1/3. The chain is Catechol 1,2-dioxygenase from Acinetobacter baylyi (strain ATCC 33305 / BD413 / ADP1).